Reading from the N-terminus, the 259-residue chain is tRNA (guanine-N(1)-)-methyltransferase (259 aa).

S-adenosyl-L-methionine is bound by residues glycine 117 and 137-142 (LGDFVL).

The protein belongs to the RNA methyltransferase TrmD family. In terms of assembly, homodimer.

The protein localises to the cytoplasm. The enzyme catalyses guanosine(37) in tRNA + S-adenosyl-L-methionine = N(1)-methylguanosine(37) in tRNA + S-adenosyl-L-homocysteine + H(+). Its function is as follows. Specifically methylates guanosine-37 in various tRNAs. The chain is tRNA (guanine-N(1)-)-methyltransferase from Polaromonas sp. (strain JS666 / ATCC BAA-500).